A 110-amino-acid polypeptide reads, in one-letter code: ATP synthase epsilon chain (110 aa).

It belongs to the ATPase epsilon chain family. As to quaternary structure, F-type ATPases have 2 components, CF(1) - the catalytic core - and CF(0) - the membrane proton channel. CF(1) has five subunits: alpha(3), beta(3), gamma(1), delta(1), epsilon(1). CF(0) has three main subunits: a, b and c.

Its subcellular location is the cell inner membrane. Produces ATP from ADP in the presence of a proton gradient across the membrane. The sequence is that of ATP synthase epsilon chain from Rickettsia typhi (strain ATCC VR-144 / Wilmington).